A 346-amino-acid chain; its full sequence is CLOCK-interacting pacemaker (346 aa).

A compositionally biased stretch (basic and acidic residues) spans 1 to 42 (MEKNQKCATEQERFKARSGHGDGQRAEPRKTQTTTESDKDSG). Disordered stretches follow at residues 1–83 (MEKN…SQPQ) and 167–228 (CARK…KELD). A compositionally biased stretch (polar residues) spans 50–68 (CLSSVEQTDTEEGPTTSRW). The span at 179–192 (NQTKRQCSKGHSGS) shows a compositional bias: basic residues. Residues 205–222 (GVQQGPVDQNVKESSVSA) show a composition bias toward polar residues. Positions 283-315 (MKTKELARHNQATQSQLEKLQEQVQLYATAMSS) form a coiled coil.

It localises to the nucleus. It is found in the cytoplasm. The protein resides in the cytosol. In terms of biological role, transcriptional repressor which acts as a negative-feedback regulator of CLOCK-BMAL1 transcriptional activity in the circadian-clock mechanism. The physiological relevance of these observations is unsure. The protein is CLOCK-interacting pacemaker (cipc) of Xenopus laevis (African clawed frog).